The primary structure comprises 325 residues: GMP reductase (325 aa).

Residue cysteine 174 is the Thioimidate intermediate of the active site. 203–226 (LIADGGIRTHGDIAKSIRFGASMV) is an NADP(+) binding site.

The protein belongs to the IMPDH/GMPR family. GuaC type 2 subfamily.

It catalyses the reaction IMP + NH4(+) + NADP(+) = GMP + NADPH + 2 H(+). Its function is as follows. Catalyzes the irreversible NADPH-dependent deamination of GMP to IMP. It functions in the conversion of nucleobase, nucleoside and nucleotide derivatives of G to A nucleotides, and in maintaining the intracellular balance of A and G nucleotides. The protein is GMP reductase of Staphylococcus aureus (strain NCTC 8325 / PS 47).